A 440-amino-acid polypeptide reads, in one-letter code: Ankyrin repeat and MYND domain-containing protein 2 (440 aa).

3 ANK repeats span residues 45–74 (NGMT…DASC), 79–108 (HGYT…ETDV), and 159–188 (KLAG…NPLL). Cys-320, Cys-323, Cys-332, Cys-335, Cys-341, Cys-345, His-353, and Cys-357 together coordinate Zn(2+). The segment at 320–357 (CTTCGEKGASKRCSVCKMVIYCDQTCQKTHWFAHKKMC) adopts an MYND-type zinc-finger fold. Residues 371–381 (AAKHKRQEEKN) are compositionally biased toward basic and acidic residues. The tract at residues 371 to 440 (AAKHKRQEEK…APTGPQLSEE (70 aa)) is disordered.

In terms of assembly, interacts with the retinal-specific guanylyl cyclase GC1.

The protein resides in the cell projection. The protein localises to the cilium. Its function is as follows. May be involved in the trafficking of signaling proteins to the cilia. In Mus musculus (Mouse), this protein is Ankyrin repeat and MYND domain-containing protein 2 (Ankmy2).